We begin with the raw amino-acid sequence, 220 residues long: Protein-L-isoaspartate O-methyltransferase (220 aa).

Residue Ser69 is part of the active site.

It belongs to the methyltransferase superfamily. L-isoaspartyl/D-aspartyl protein methyltransferase family.

It is found in the cytoplasm. The enzyme catalyses [protein]-L-isoaspartate + S-adenosyl-L-methionine = [protein]-L-isoaspartate alpha-methyl ester + S-adenosyl-L-homocysteine. Its function is as follows. Catalyzes the methyl esterification of L-isoaspartyl residues in peptides and proteins that result from spontaneous decomposition of normal L-aspartyl and L-asparaginyl residues. It plays a role in the repair and/or degradation of damaged proteins. The chain is Protein-L-isoaspartate O-methyltransferase from Alcanivorax borkumensis (strain ATCC 700651 / DSM 11573 / NCIMB 13689 / SK2).